The chain runs to 257 residues: 5'-nucleotidase SurE (257 aa).

A divalent metal cation-binding residues include Asp9, Asp10, Ser42, and Asn96.

Belongs to the SurE nucleotidase family. It depends on a divalent metal cation as a cofactor.

It is found in the cytoplasm. It carries out the reaction a ribonucleoside 5'-phosphate + H2O = a ribonucleoside + phosphate. Nucleotidase that shows phosphatase activity on nucleoside 5'-monophosphates. The chain is 5'-nucleotidase SurE from Campylobacter lari (strain RM2100 / D67 / ATCC BAA-1060).